The following is a 42-amino-acid chain: Snaclec lebecetin subunit alpha (42 aa).

The region spanning 1 to 42 (DQDCLPGWSSHEGHCYKVFNLDKTWEDAEKFCTEQPSNGHLV) is the C-type lectin domain. An intrachain disulfide couples C4 to C15.

Heterodimer of subunits alpha and beta; disulfide-linked. The cofactor is Ca(2+). Post-translationally, glycosylated. As to expression, expressed by the venom gland.

It is found in the secreted. Binds to the platelet GPIb/IX/V receptor system and inhibits ristocetin-induced platelet aggregation in human platelet-rich plasma. Strongly inhibits platelet aggregation induced by ADP, calcium ionophore, thrombin and collagen. Does not inhibit U46619-induced platelet aggregation. This Macrovipera lebetinus (Levantine viper) protein is Snaclec lebecetin subunit alpha.